The primary structure comprises 95 residues: Co-chaperonin GroES (95 aa).

It belongs to the GroES chaperonin family. Heptamer of 7 subunits arranged in a ring. Interacts with the chaperonin GroEL.

It localises to the cytoplasm. In terms of biological role, together with the chaperonin GroEL, plays an essential role in assisting protein folding. The GroEL-GroES system forms a nano-cage that allows encapsulation of the non-native substrate proteins and provides a physical environment optimized to promote and accelerate protein folding. GroES binds to the apical surface of the GroEL ring, thereby capping the opening of the GroEL channel. This is Co-chaperonin GroES from Ruthia magnifica subsp. Calyptogena magnifica.